A 292-amino-acid polypeptide reads, in one-letter code: NAD kinase (292 aa).

Catalysis depends on Asp-74, which acts as the Proton acceptor. Residues 74–75, 147–148, Asp-177, and 188–193 contribute to the NAD(+) site; these read DG, NE, and TGYSLS.

Belongs to the NAD kinase family. The cofactor is a divalent metal cation.

It localises to the cytoplasm. The catalysed reaction is NAD(+) + ATP = ADP + NADP(+) + H(+). In terms of biological role, involved in the regulation of the intracellular balance of NAD and NADP, and is a key enzyme in the biosynthesis of NADP. Catalyzes specifically the phosphorylation on 2'-hydroxyl of the adenosine moiety of NAD to yield NADP. The sequence is that of NAD kinase from Cytophaga hutchinsonii (strain ATCC 33406 / DSM 1761 / CIP 103989 / NBRC 15051 / NCIMB 9469 / D465).